The primary structure comprises 522 residues: GMP synthase [glutamine-hydrolyzing] (522 aa).

Positions 9-204 (KILILDFGAQ…VVDICGCQTL (196 aa)) constitute a Glutamine amidotransferase type-1 domain. The Nucleophile role is filled by C86. Catalysis depends on residues H178 and E180. In terms of domain architecture, GMPS ATP-PPase spans 205 to 397 (WTSANIIEDQ…LGLPHAMVYR (193 aa)). Residue 232–238 (SGGVDSS) coordinates ATP.

In terms of assembly, homodimer.

The catalysed reaction is XMP + L-glutamine + ATP + H2O = GMP + L-glutamate + AMP + diphosphate + 2 H(+). It functions in the pathway purine metabolism; GMP biosynthesis; GMP from XMP (L-Gln route): step 1/1. Its function is as follows. Catalyzes the synthesis of GMP from XMP. The chain is GMP synthase [glutamine-hydrolyzing] from Xylella fastidiosa (strain M23).